A 172-amino-acid chain; its full sequence is Iron-sulfur cluster assembly protein SufA (172 aa).

The first 19 residues, 1–19, serve as a signal peptide directing secretion; it reads MFINIFLFLFAATINISSS. The [4Fe-4S] cluster site is built by Cys96, Cys164, and Cys166.

It belongs to the HesB/IscA family. In terms of assembly, homodimer.

The protein resides in the plastid. It localises to the apicoplast. It participates in cofactor biosynthesis; iron-sulfur cluster biosynthesis. Functionally, participates in the sulfur mobilization (SUF) pathway for iron-sulfur (Fe-S) cluster biogenesis. Involved in the pre-assembly of [4Fe-4S] clusters and their transfer to target proteins. The sequence is that of Iron-sulfur cluster assembly protein SufA from Plasmodium berghei (strain Anka).